The chain runs to 600 residues: Elongation factor 4 (600 aa).

The tr-type G domain maps to 4-186; sequence SKIRNFSIIA…AIVDKIPPPS (183 aa). Residues 16-21 and 133-136 contribute to the GTP site; these read DHGKST and NKID.

The protein belongs to the TRAFAC class translation factor GTPase superfamily. Classic translation factor GTPase family. LepA subfamily.

Its subcellular location is the cell membrane. The catalysed reaction is GTP + H2O = GDP + phosphate + H(+). Required for accurate and efficient protein synthesis under certain stress conditions. May act as a fidelity factor of the translation reaction, by catalyzing a one-codon backward translocation of tRNAs on improperly translocated ribosomes. Back-translocation proceeds from a post-translocation (POST) complex to a pre-translocation (PRE) complex, thus giving elongation factor G a second chance to translocate the tRNAs correctly. Binds to ribosomes in a GTP-dependent manner. This chain is Elongation factor 4, found in Mycoplasma capricolum subsp. capricolum (strain California kid / ATCC 27343 / NCTC 10154).